A 339-amino-acid polypeptide reads, in one-letter code: MYTLARQLLFKLSPETSHDLSLDLIGAGGRLGLNGLLCKAPAQMPVKVMGLEFANPVGLAAGLDKNGAAIDGFAQLGFGFVEIGTVTPRPQPGNPKPRIFRLPQAEAIINRMGFNNLGVDNLLARVAASQYKGVLGINIGKNFDTPVERAVDDYLICLDKVYAHASYVTVNVSSPNTPGLRSLQFGESLKQLLAALSQRQQELTAIHGKRVPLAIKIAPDMSDEETVEVARALLETGMDAVIATNTTLSREGVEGLEHGAEAGGLSGAPVREKSTHTVKVLAAELAGRLPIIAVGGITEGKHAAEKIAAGASLVQLYSGFIYKGPALIRESVDAIAAMG.

FMN-binding positions include 61–65 and Thr-85; that span reads AGLDK. Residue Lys-65 participates in substrate binding. Position 110–114 (110–114) interacts with substrate; it reads NRMGF. Residues Asn-138 and Asn-171 each contribute to the FMN site. Asn-171 provides a ligand contact to substrate. The active-site Nucleophile is Ser-174. Asn-176 contributes to the substrate binding site. The FMN site is built by Lys-216 and Thr-244. Residue 245–246 coordinates substrate; sequence NT. FMN contacts are provided by residues Gly-267, Gly-296, and 317-318; that span reads YS.

It belongs to the dihydroorotate dehydrogenase family. Type 2 subfamily. Monomer. FMN serves as cofactor.

The protein localises to the cell membrane. The enzyme catalyses (S)-dihydroorotate + a quinone = orotate + a quinol. It participates in pyrimidine metabolism; UMP biosynthesis via de novo pathway; orotate from (S)-dihydroorotate (quinone route): step 1/1. In terms of biological role, catalyzes the conversion of dihydroorotate to orotate with quinone as electron acceptor. The chain is Dihydroorotate dehydrogenase (quinone) from Pseudomonas fluorescens (strain ATCC BAA-477 / NRRL B-23932 / Pf-5).